The chain runs to 244 residues: 5'-nucleotidase SurE (244 aa).

Positions 8, 9, 39, and 96 each coordinate a divalent metal cation.

This sequence belongs to the SurE nucleotidase family. A divalent metal cation serves as cofactor.

Its subcellular location is the cytoplasm. The enzyme catalyses a ribonucleoside 5'-phosphate + H2O = a ribonucleoside + phosphate. Functionally, nucleotidase that shows phosphatase activity on nucleoside 5'-monophosphates. The chain is 5'-nucleotidase SurE from Thermus thermophilus (strain ATCC 27634 / DSM 579 / HB8).